A 1061-amino-acid polypeptide reads, in one-letter code: E3 ubiquitin-protein ligase Smurf1 (1061 aa).

Positions 1–116 (MNKLDYPRRN…KGAGFQRLDL (116 aa)) constitute a C2 domain. Disordered stretches follow at residues 143–176 (SGNPLAIVGPSGDVRGPSEDDSSEDSLPEGWEER) and 188–496 (HATK…SGQR). The region spanning 167 to 200 (DSLPEGWEERRTDNGRVYYVNHATKSTQWDRPRQ) is the WW 1 domain. Composition is skewed to polar residues over residues 207 to 225 (SHATSPQQRHNTHNGNSGD) and 233 to 255 (TRSTTCTNLMNNGHRSRDLSVTA). S262 is modified (phosphoserine). Residues 264 to 273 (EILSSVGKEN) are compositionally biased toward polar residues. 2 stretches are compositionally biased toward low complexity: residues 274 to 300 (TSPTTPVSATTTPGKKTSSSNSSSAGG) and 311 to 322 (PATPTSSTTSAS). Positions 348 to 359 (TPTSPTGQQNYV) are enriched in polar residues. Positions 360–378 (NGNAQNGSTSGNGSGQAAQ) are enriched in low complexity. A compositionally biased stretch (polar residues) spans 379–392 (PQSASNGWTQEDAA). Positions 393–409 (TTTSPSTTTSPPRHSQS) are enriched in low complexity. The residue at position 412 (T412) is a Phosphothreonine. Residue S416 is modified to Phosphoserine. The segment covering 417–439 (PPASVTPSANGNVHSPNANSTPA) has biased composition (polar residues). A compositionally biased stretch (gly residues) spans 480–494 (RNGGTSGGGGGGGSG). 2 WW domains span residues 513-546 (LDLPPGYEMRTTQQGQVYFYHIPTGVSTWHDPRI) and 561-594 (GPLPSGWEQRKTASGRVYFVDHNNRTTQFTDPRL). An interaction with MAD region spans residues 513-602 (LDLPPGYEMR…RLSGSILQMI (90 aa)). 2 stretches are compositionally biased toward low complexity: residues 608 to 617 (PPTSAANAGT) and 624 to 656 (TPATPSAAAAVPPQATPASNATPTTLTTTTNPP). Residues 608 to 661 (PPTSAANAGTPAPPSATPATPSAAAAVPPQATPASNATPTTLTTTTNPPHRIVP) are disordered. Residues 723-1061 (RAKDMRKRLM…VEETCGFAVE (339 aa)) enclose the HECT domain. The active-site Glycyl thioester intermediate is C1029.

Interacts with phosphorylated MAD.

The catalysed reaction is S-ubiquitinyl-[E2 ubiquitin-conjugating enzyme]-L-cysteine + [acceptor protein]-L-lysine = [E2 ubiquitin-conjugating enzyme]-L-cysteine + N(6)-ubiquitinyl-[acceptor protein]-L-lysine.. It functions in the pathway protein modification; protein ubiquitination. In terms of biological role, E3 ubiquitin-protein ligase which accepts ubiquitin from an E2 ubiquitin-conjugating enzyme in the form of a thioester and then directly transfers the ubiquitin to targeted substrates. Down-regulates Dpp signaling after gastrulation by promoting MAD ubiquitination and subsequent degradation. This chain is E3 ubiquitin-protein ligase Smurf1, found in Drosophila melanogaster (Fruit fly).